The chain runs to 517 residues: MQEKIIILDFGSQTTQLIARRVRELNTYCEIVPYNKFPHNDPSIIGVILSGSPFSVYDESAFKVDLSDIRGKYPILGICYGAQFMSYTNGGKVEPAGTREYGRAHLSTFDQENPLLKNVREHSQVWMSHGDTITAIPENFKIIASTDKVAIAAYQIKEEKVWGVQFHPEVFHSEDGTQLLKNFVVDICGGKQDWSAASFIETTVAELKAQLGNDKVVLGLSGGVDSSVAAVLLNKAIGKNLTCIFVDHGMLRKNEFKNVLHDYECLGLNVIGVDASQKFFSELAGVEEPEKKRKIIGKGFIDVFDEEAHKIKDVKWLAQGTIYPDCIESLSITGTVIKSHHNVGGLPEKMNLKLCEPLRLLFKDEVRHVGRELGMPEHLITRHPFPGPGLAVRILGDITPEKVRILQDADDIYIQGLRDWKVKDSDGNETSLYHQVWQAGVILLPVQSVGVMGDERTYERAVALRAVTSTDAMTADWAHLPYEFMAKVSNDIINKVKGVNRVCYDISSKPPATIEWE.

The Glutamine amidotransferase type-1 domain maps to 4–193 (KIIILDFGSQ…VVDICGGKQD (190 aa)). Residue C79 is the Nucleophile of the active site. Catalysis depends on residues H167 and E169. Residues 194–382 (WSAASFIETT…LGMPEHLITR (189 aa)) enclose the GMPS ATP-PPase domain. Residue 221-227 (SGGVDSS) participates in ATP binding.

Homodimer.

It catalyses the reaction XMP + L-glutamine + ATP + H2O = GMP + L-glutamate + AMP + diphosphate + 2 H(+). It functions in the pathway purine metabolism; GMP biosynthesis; GMP from XMP (L-Gln route): step 1/1. In terms of biological role, catalyzes the synthesis of GMP from XMP. The protein is GMP synthase [glutamine-hydrolyzing] of Phocaeicola vulgatus (strain ATCC 8482 / DSM 1447 / JCM 5826 / CCUG 4940 / NBRC 14291 / NCTC 11154) (Bacteroides vulgatus).